Consider the following 331-residue polypeptide: Phosphoenolpyruvate transferase (331 aa).

Residue D63 coordinates 7,8-didemethyl-8-hydroxy-5-deazariboflavin.

Belongs to the CofD family. In terms of assembly, homodimer. Mg(2+) serves as cofactor.

It catalyses the reaction enolpyruvoyl-2-diphospho-5'-guanosine + 7,8-didemethyl-8-hydroxy-5-deazariboflavin = dehydro coenzyme F420-0 + GMP + H(+). The protein operates within cofactor biosynthesis; coenzyme F420 biosynthesis. In terms of biological role, catalyzes the transfer of the phosphoenolpyruvate moiety from enoylpyruvoyl-2-diphospho-5'-guanosine (EPPG) to 7,8-didemethyl-8-hydroxy-5-deazariboflavin (FO) with the formation of dehydro coenzyme F420-0 and GMP. In Mycobacterium bovis (strain ATCC BAA-935 / AF2122/97), this protein is Phosphoenolpyruvate transferase.